A 912-amino-acid polypeptide reads, in one-letter code: Non-lysosomal glucosylceramidase (912 aa).

Residues 886 to 912 are disordered; the sequence is HKKNSSRPAVTQGTAPSQPECGPKRSL. The segment covering 891–902 has biased composition (polar residues); it reads SRPAVTQGTAPS.

It belongs to the non-lysosomal glucosylceramidase family.

The protein localises to the endoplasmic reticulum membrane. Its subcellular location is the golgi apparatus membrane. It catalyses the reaction a beta-D-glucosyl-(1&lt;-&gt;1')-N-acylsphing-4-enine + H2O = an N-acylsphing-4-enine + D-glucose. The catalysed reaction is a beta-D-galactosyl-(1&lt;-&gt;1')-N-acylsphing-4-enine + H2O = an N-acylsphing-4-enine + D-galactose. It carries out the reaction beta-D-glucosyl-(1-&gt;3)-O-lithocholate + H2O = lithocholate + D-glucose. The enzyme catalyses beta-D-glucosyl-(1-&gt;3)-O-chenodeoxycholate + H2O = chenodeoxycholate + D-glucose. It catalyses the reaction a di-trans,poly-cis-dolichyl beta-D-glucosyl phosphate + chenodeoxycholate = beta-D-glucosyl-(1-&gt;3)-O-chenodeoxycholate + a di-trans,poly-cis-dolichyl phosphate + H(+). The catalysed reaction is octyl beta-D-glucose + chenodeoxycholate = beta-D-glucosyl-(1-&gt;3)-O-chenodeoxycholate + octan-1-ol. It carries out the reaction cholesteryl 3-beta-D-glucoside + H2O = cholesterol + D-glucose. The enzyme catalyses a beta-D-glucosyl-(1&lt;-&gt;1')-N-acylsphing-4-enine + cholesterol = cholesteryl 3-beta-D-glucoside + an N-acylsphing-4-enine. It catalyses the reaction beta-D-glucosyl-N-(9Z-octadecenoyl)-sphing-4E-enine + cholesterol = N-(9Z-octadecenoyl)-sphing-4-enine + cholesteryl 3-beta-D-glucoside. The catalysed reaction is a beta-D-galactosyl-(1&lt;-&gt;1')-N-acylsphing-4-enine + cholesterol = cholesteryl 3-beta-D-galactoside + an N-acylsphing-4-enine. It carries out the reaction 1-(beta-D-galactosyl)-N-dodecanoylsphing-4-enine + cholesterol = cholesteryl 3-beta-D-galactoside + N-dodecanoylsphing-4-enine. The protein operates within lipid metabolism; sphingolipid metabolism. It functions in the pathway steroid metabolism; cholesterol metabolism. Its activity is regulated as follows. Enzymatic activity is dependent on membrane association and requires the presence of lipids. Non-lysosomal glucosylceramidase that catalyzes the hydrolysis of glucosylceramides/GlcCers (such as beta-D-glucosyl-(1&lt;-&gt;1')-N-acylsphing-4-enine) to free glucose and ceramides (such as N-acylsphing-4-enine). GlcCers are membrane glycosphingolipids that have a wide intracellular distribution. They are the main precursors of more complex glycosphingolipids that play a role in cellular growth, differentiation, adhesion, signaling, cytoskeletal dynamics and membrane properties. Involved in the transglucosylation of cholesterol, transfers glucose from GlcCer to cholesterol, thereby modifying its water solubility and biological properties. Under specific conditions, may catalyze the reverse reaction, transferring glucose from cholesteryl-3-beta-D-glucoside to ceramide (such as N-acylsphing-4-enine). May play a role in the metabolism of bile acids. Able to hydrolyze bile acid 3-O-glucosides as well as to produce bile acid-glucose conjugates thanks to a bile acid glucosyl transferase activity. Catalyzes the hydrolysis of galactosylceramides/GalCers (such as beta-D-galactosyl-(1&lt;-&gt;1')-N-acylsphing-4-enine), as well as the galactosyl transfer between GalCers and cholesterol in vitro with lower activity compared with their activity against GlcCers. In Rattus norvegicus (Rat), this protein is Non-lysosomal glucosylceramidase.